The following is a 218-amino-acid chain: Protein GrpE (218 aa).

Composition is skewed to basic and acidic residues over residues 1-13 (MSKN…HQNN) and 20-32 (VDKK…NKQE). A disordered region spans residues 1–32 (MSKNNENIKHQNNDKVNNQVDKKETKNHNKQE).

Belongs to the GrpE family. Homodimer.

The protein resides in the cytoplasm. Participates actively in the response to hyperosmotic and heat shock by preventing the aggregation of stress-denatured proteins, in association with DnaK and GrpE. It is the nucleotide exchange factor for DnaK and may function as a thermosensor. Unfolded proteins bind initially to DnaJ; upon interaction with the DnaJ-bound protein, DnaK hydrolyzes its bound ATP, resulting in the formation of a stable complex. GrpE releases ADP from DnaK; ATP binding to DnaK triggers the release of the substrate protein, thus completing the reaction cycle. Several rounds of ATP-dependent interactions between DnaJ, DnaK and GrpE are required for fully efficient folding. This chain is Protein GrpE, found in Ureaplasma parvum serovar 3 (strain ATCC 27815 / 27 / NCTC 11736).